Here is a 344-residue protein sequence, read N- to C-terminus: Arginine N-succinyltransferase (344 aa).

A succinyl-CoA-binding site is contributed by L125. H229 serves as the catalytic Proton donor.

It belongs to the arginine N-succinyltransferase family.

The catalysed reaction is succinyl-CoA + L-arginine = N(2)-succinyl-L-arginine + CoA + H(+). It functions in the pathway amino-acid degradation; L-arginine degradation via AST pathway; L-glutamate and succinate from L-arginine: step 1/5. Functionally, catalyzes the transfer of succinyl-CoA to arginine to produce N(2)-succinylarginine. The sequence is that of Arginine N-succinyltransferase from Shigella flexneri.